We begin with the raw amino-acid sequence, 220 residues long: Charged multivesicular body protein 2a (220 aa).

Methionine 1 carries the N-acetylmethionine modification. Coiled coils occupy residues 12–52 (EELL…KMAK) and 195–220 (RAAE…LRRD). Positions 208-218 (ADLEERLKNLR) match the MIT-interacting motif motif.

This sequence belongs to the SNF7 family. As to quaternary structure, probable core component of the endosomal sorting required for transport complex III (ESCRT-III). ESCRT-III components are thought to multimerize to form a flat lattice on the perimeter membrane of the endosome.

The protein resides in the late endosome membrane. The protein localises to the cytoplasm. Probable core component of the endosomal sorting required for transport complex III (ESCRT-III) which is involved in multivesicular bodies (MVBs) formation and sorting of endosomal cargo proteins into MVBs. MVBs contain intraluminal vesicles (ILVs) that are generated by invagination and scission from the limiting membrane of the endosome and mostly are delivered to lysosomes enabling degradation of membrane proteins, such as stimulated growth factor receptors, lysosomal enzymes and lipids. This Gallus gallus (Chicken) protein is Charged multivesicular body protein 2a (CHMP2A).